A 612-amino-acid polypeptide reads, in one-letter code: Cytoplasmic dynein 1 intermediate chain 2 (612 aa).

Basic and acidic residues-rich tracts occupy residues 1-13 (MSDK…ELER) and 20-43 (QIRE…KKEA). The segment at 1-188 (MSDKSDLKAE…PHELTEEEKQ (188 aa)) is disordered. Serine 2 bears the N-acetylserine mark. Diphosphoserine is present on serine 51. Phosphoserine occurs at positions 51 and 84. Over residues 82 to 91 (PSSKSVSTPS) the composition is skewed to low complexity. A Phosphothreonine modification is found at threonine 89. Residues serine 91, serine 95, and serine 98 each carry the phosphoserine modification. A compositionally biased stretch (basic and acidic residues) spans 164 to 188 (EKTLKKDEENDSKAPPHELTEEEKQ). WD repeat units follow at residues 251-300 (SKHR…TTPE), 304-344 (HCQS…RTPV), 353-394 (AHTH…HPQD), 403-443 (SKAV…AGIS), 448-493 (GHQG…PLYS), 496-536 (DNSD…EVPT), and 542-581 (EGNP…AVPR).

It belongs to the dynein intermediate chain family. Homodimer. The cytoplasmic dynein 1 complex consists of two catalytic heavy chains (HCs) and a number of non-catalytic subunits presented by intermediate chains (ICs), light intermediate chains (LICs) and light chains (LCs); the composition seems to vary in respect to the IC, LIC and LC composition. The heavy chain homodimer serves as a scaffold for the probable homodimeric assembly of the respective non-catalytic subunits. The ICs and LICs bind directly to the HC dimer and the LCs assemble on the IC dimer. Interacts with DYNLT3. Interacts with DYNLT1. Interacts (dephosphorylated at Ser-84) with DCTN1. Interacts with BICD2. Interacts with SPEF2. Interacts with CFAP61. Post-translationally, the phosphorylation status of Ser-84 appears to be involved in dynactin-dependent target binding. In terms of processing, pyrophosphorylation by 5-diphosphoinositol pentakisphosphate (5-IP7) promotes interaction with DCTN1. Serine pyrophosphorylation is achieved by Mg(2+)-dependent, but enzyme independent transfer of a beta-phosphate from a inositol pyrophosphate to a pre-phosphorylated serine residue.

The protein resides in the cytoplasm. It is found in the cytoskeleton. Its function is as follows. Acts as one of several non-catalytic accessory components of the cytoplasmic dynein 1 complex that are thought to be involved in linking dynein to cargos and to adapter proteins that regulate dynein function. Cytoplasmic dynein 1 acts as a motor for the intracellular retrograde motility of vesicles and organelles along microtubules. The intermediate chains mediate the binding of dynein to dynactin via its 150 kDa component (p150-glued) DCTN1. Involved in membrane-transport, such as Golgi apparatus, late endosomes and lysosomes. This chain is Cytoplasmic dynein 1 intermediate chain 2 (Dync1i2), found in Mus musculus (Mouse).